The primary structure comprises 804 residues: Chondroitin sulfate synthase mig-22 (804 aa).

The Cytoplasmic segment spans residues 1 to 6; the sequence is MVGGGR. Residues 7 to 27 traverse the membrane as a helical; Signal-anchor for type II membrane protein segment; sequence TGIHLLLGFLIGAALALFFFS. The Lumenal portion of the chain corresponds to 28–804; sequence STPSIDLTSS…QLAKLLFHEK (777 aa). Residues Asn-123, Asn-172, and Asn-268 are each glycosylated (N-linked (GlcNAc...) asparagine).

Belongs to the chondroitin N-acetylgalactosaminyltransferase family. Interacts with sqv-5. Requires a divalent metal cation as cofactor. In terms of tissue distribution, expressed in seam cells, the vulval epithelium and in oocytes (at protein level).

Its subcellular location is the golgi apparatus. The protein resides in the golgi stack membrane. It carries out the reaction 3-O-(beta-D-GlcA-(1-&gt;3)-beta-D-GalNAc-(1-&gt;4)-beta-D-GlcA-(1-&gt;3)-beta-D-Gal-(1-&gt;3)-beta-D-Gal-(1-&gt;4)-beta-D-Xyl)-L-seryl-[protein] + UDP-N-acetyl-alpha-D-galactosamine = 3-O-(beta-D-GalNAc-(1-&gt;4)-beta-D-GlcA-(1-&gt;3)-beta-D-GalNAc-(1-&gt;4)-beta-D-GlcA-(1-&gt;3)-beta-D-Gal-(1-&gt;3)-beta-D-Gal-(1-&gt;4)-beta-D-Xyl)-L-seryl-[protein] + UDP + H(+). It catalyses the reaction 3-O-{beta-D-GlcA-(1-&gt;3)-[beta-D-GalNAc-(1-&gt;4)-beta-D-GlcA-(1-&gt;3)](n)-beta-D-GalNAc-(1-&gt;4)-beta-D-GlcA-(1-&gt;3)-beta-D-Gal-(1-&gt;3)-beta-D-Gal-(1-&gt;4)-beta-D-Xyl}-L-seryl-[protein] + UDP-N-acetyl-alpha-D-galactosamine = 3-O-{[beta-D-GalNAc-(1-&gt;4)-beta-D-GlcA-(1-&gt;3)](n+1)-beta-D-GalNAc-(1-&gt;4)-beta-D-GlcA-(1-&gt;3)-beta-D-Gal-(1-&gt;3)-beta-D-Gal-(1-&gt;4)-beta-D-Xyl}-L-seryl-[protein] + UDP + H(+). The catalysed reaction is 3-O-(beta-D-GalNAc-(1-&gt;4)-beta-D-GlcA-(1-&gt;3)-beta-D-Gal-(1-&gt;3)-beta-D-Gal-(1-&gt;4)-beta-D-Xyl)-L-seryl-[protein] + UDP-alpha-D-glucuronate = 3-O-(beta-D-GlcA-(1-&gt;3)-beta-D-GalNAc-(1-&gt;4)-beta-D-GlcA-(1-&gt;3)-beta-D-Gal-(1-&gt;3)-beta-D-Gal-(1-&gt;4)-beta-D-Xyl)-L-seryl-[protein] + UDP + H(+). The enzyme catalyses 3-O-{[beta-D-GalNAc-(1-&gt;4)-beta-D-GlcA-(1-&gt;3)](n)-beta-D-GalNAc-(1-&gt;4)-beta-D-GlcA-(1-&gt;3)-beta-D-Gal-(1-&gt;3)-beta-D-Gal-(1-&gt;4)-beta-D-Xyl}-L-seryl-[protein] + UDP-alpha-D-glucuronate = 3-O-{beta-D-GlcA-(1-&gt;3)-[beta-D-GalNAc-(1-&gt;4)-beta-D-GlcA-(1-&gt;3)](n)-beta-D-GalNAc-(1-&gt;4)-beta-D-GlcA-(1-&gt;3)-beta-D-Gal-(1-&gt;3)-beta-D-Gal-(1-&gt;4)-beta-D-Xyl}-L-seryl-[protein] + UDP + H(+). Functionally, has both beta-1,3-glucuronic acid and beta-1,4-N-acetylgalactosamine transferase activity. Transfers glucuronic acid (GlcUA) from UDP-GlcUA and N-acetylgalactosamine (GalNAc) from UDP-GalNAc to the non-reducing end of the elongating chondroitin polymer. Required together with sqv-5 for the biosynthesis of chondroitin. Chondroitin is involved in organogenesis of the vulva, maturation of the gonad, and neural development. May have a specific role in unc-6/netrin-mediated dorsal guidance of gonadal distal tip cells. Glycosyltransferase activity is weak. The chain is Chondroitin sulfate synthase mig-22 (mig-22) from Caenorhabditis elegans.